Here is a 503-residue protein sequence, read N- to C-terminus: Probable cytosol aminopeptidase (503 aa).

2 residues coordinate Mn(2+): lysine 270 and aspartate 275. The active site involves lysine 282. Residues aspartate 293, aspartate 352, and glutamate 354 each contribute to the Mn(2+) site. Arginine 356 is a catalytic residue.

Belongs to the peptidase M17 family. Mn(2+) serves as cofactor.

Its subcellular location is the cytoplasm. The catalysed reaction is Release of an N-terminal amino acid, Xaa-|-Yaa-, in which Xaa is preferably Leu, but may be other amino acids including Pro although not Arg or Lys, and Yaa may be Pro. Amino acid amides and methyl esters are also readily hydrolyzed, but rates on arylamides are exceedingly low.. The enzyme catalyses Release of an N-terminal amino acid, preferentially leucine, but not glutamic or aspartic acids.. Its function is as follows. Presumably involved in the processing and regular turnover of intracellular proteins. Catalyzes the removal of unsubstituted N-terminal amino acids from various peptides. This Shigella boydii serotype 4 (strain Sb227) protein is Probable cytosol aminopeptidase.